Consider the following 315-residue polypeptide: Aspartate carbamoyltransferase catalytic subunit (315 aa).

Carbamoyl phosphate is bound by residues Arg64 and Thr65. Lys92 is an L-aspartate binding site. Residues Arg114, His142, and Gln145 each coordinate carbamoyl phosphate. Positions 175 and 229 each coordinate L-aspartate. Carbamoyl phosphate-binding residues include Gly270 and Pro271.

Belongs to the aspartate/ornithine carbamoyltransferase superfamily. ATCase family. As to quaternary structure, heterododecamer (2C3:3R2) of six catalytic PyrB chains organized as two trimers (C3), and six regulatory PyrI chains organized as three dimers (R2).

It carries out the reaction carbamoyl phosphate + L-aspartate = N-carbamoyl-L-aspartate + phosphate + H(+). It functions in the pathway pyrimidine metabolism; UMP biosynthesis via de novo pathway; (S)-dihydroorotate from bicarbonate: step 2/3. Its function is as follows. Catalyzes the condensation of carbamoyl phosphate and aspartate to form carbamoyl aspartate and inorganic phosphate, the committed step in the de novo pyrimidine nucleotide biosynthesis pathway. This chain is Aspartate carbamoyltransferase catalytic subunit, found in Bradyrhizobium diazoefficiens (strain JCM 10833 / BCRC 13528 / IAM 13628 / NBRC 14792 / USDA 110).